Consider the following 216-residue polypeptide: Chaperone protein TorD (216 aa).

Belongs to the TorD/DmsD family. TorD subfamily.

Its subcellular location is the cytoplasm. In terms of biological role, involved in the biogenesis of TorA. Acts on TorA before the insertion of the molybdenum cofactor and, as a result, probably favors a conformation of the apoenzyme that is competent for acquiring the cofactor. This chain is Chaperone protein TorD, found in Photobacterium profundum (strain SS9).